The following is an 843-amino-acid chain: Ribosome biogenesis protein ERB1 (843 aa).

Disordered stretches follow at residues 36–189 (KKAA…RYIY) and 364–419 (ADES…REYL). 3 stretches are compositionally biased toward acidic residues: residues 77 to 92 (VDEDPSVVSGDEYDLE), 106 to 139 (SDSEIELIGDFSSDDGEDDDGEDDDELDSDEVPS), and 163 to 172 (ESNDLSDDNE). The segment covering 173–183 (PNYRIEKDANG) has biased composition (basic and acidic residues). Residues 379–396 (PKLPPPGYEESYHPPPEY) are compositionally biased toward pro residues. Positions 397 to 406 (LPDKKEKEEW) are enriched in basic and acidic residues. WD repeat units follow at residues 487–526 (GHRGRVRSLAIDPTGVWLASGGDDGTVRVWELLTGRQLWS), 530–570 (SDED…LELE), 668–706 (KGGGSPQVAHFHPSKPILFVANQRSIRAYDLSRQTLVKI), 709–754 (PGAR…RPYK), 758–797 (YHQKAIRAVKYHPHYPLFADTSDDGSLQIFHGSVTGDLLS), and 813–843 (TGDLGVLDLDWHPREAWCVSAGADGTCRLWM).

This sequence belongs to the WD repeat BOP1/ERB1 family. As to quaternary structure, component of the NOP7 complex, composed of ERB1, NOP7 and YTM1. The complex is held together by ERB1, which interacts with NOP7 via its N-terminal domain and with YTM1 via a high-affinity interaction between the seven-bladed beta-propeller domains of the 2 proteins. The NOP7 complex associates with the 66S pre-ribosome.

The protein localises to the nucleus. It localises to the nucleolus. It is found in the nucleoplasm. Functionally, component of the NOP7 complex, which is required for maturation of the 25S and 5.8S ribosomal RNAs and formation of the 60S ribosome. The protein is Ribosome biogenesis protein ERB1 of Coccidioides immitis (strain RS) (Valley fever fungus).